The following is a 413-amino-acid chain: Sprouty-related, EVH1 domain-containing protein 2 (413 aa).

Residues 5 to 122 enclose the WH1 domain; sequence THPNDDSYIV…RGVRKALEDL (118 aa). Residues 122–163 are disordered; that stretch reads LTEGSTTSSSTLQNEAELGDDDVFTTATDSSSNSSQKKDHST. Positions 195-248 constitute a KBD domain; the sequence is FSRNLFPFEDEEIVRINPRERWMITGYEDYRYAAVPDKFIQPEDSDSYVQISKN. The SPR domain maps to 303–411; that stretch reads RCVYCRDMFN…CGCCGGKHKA (109 aa).

The protein localises to the cell membrane. Its subcellular location is the cytoplasmic vesicle. It is found in the secretory vesicle membrane. The protein resides in the cytoplasm. Its function is as follows. Negatively regulates Ras signaling pathways and downstream activation of MAP kinases. The protein is Sprouty-related, EVH1 domain-containing protein 2 (spred2) of Danio rerio (Zebrafish).